Here is a 505-residue protein sequence, read N- to C-terminus: Maturase K (505 aa).

The protein belongs to the intron maturase 2 family. MatK subfamily.

The protein resides in the plastid. It localises to the chloroplast. In terms of biological role, usually encoded in the trnK tRNA gene intron. Probably assists in splicing its own and other chloroplast group II introns. The sequence is that of Maturase K from Elaeagnus umbellata (Autumn olive).